Reading from the N-terminus, the 285-residue chain is Avenin-like b2 (285 aa).

The first 18 residues, 1 to 18 (MKVFILALLALTATTAIA), serve as a signal peptide directing secretion.

It belongs to the prolamin family. In terms of processing, contains disulfide bonds.

Seed storage protein. Might be integrated via inter-chain disulfide bonds within the glutenin polymer. This Triticum aestivum (Wheat) protein is Avenin-like b2.